An 892-amino-acid chain; its full sequence is Translation initiation factor IF-2 (892 aa).

The interval 51 to 296 (REHGSAPNKL…KGKRKPSTLQ (246 aa)) is disordered. Polar residues predominate over residues 68-82 (STLNIPSTGGKSKSV). Residues 99–217 (EQAKAEEQAQ…KMAAENEGKW (119 aa)) show a composition bias toward basic and acidic residues. Positions 224-237 (QTESADYHVTTSQH) are enriched in polar residues. The segment covering 239–254 (RAAEDENDAKVEGDRR) has biased composition (basic and acidic residues). Over residues 255-269 (SRTRGGKATKQKKGN) the composition is skewed to basic residues. Residues 270-283 (KLSESKADREEARA) show a composition bias toward basic and acidic residues. The region spanning 391-560 (HRAPVVTIMG…LLQAEVMELK (170 aa)) is the tr-type G domain. Residues 400-407 (GHVDHGKT) are G1. 400-407 (GHVDHGKT) contacts GTP. The interval 425-429 (GITQH) is G2. The G3 stretch occupies residues 446–449 (DTPG). Residues 446-450 (DTPGH) and 500-503 (NKID) each bind GTP. The segment at 500–503 (NKID) is G4. Residues 536-538 (SAK) form a G5 region.

This sequence belongs to the TRAFAC class translation factor GTPase superfamily. Classic translation factor GTPase family. IF-2 subfamily.

It is found in the cytoplasm. Functionally, one of the essential components for the initiation of protein synthesis. Protects formylmethionyl-tRNA from spontaneous hydrolysis and promotes its binding to the 30S ribosomal subunits. Also involved in the hydrolysis of GTP during the formation of the 70S ribosomal complex. This Yersinia enterocolitica serotype O:8 / biotype 1B (strain NCTC 13174 / 8081) protein is Translation initiation factor IF-2.